Consider the following 548-residue polypeptide: Nodulation protein NolO (548 aa).

This sequence belongs to the NodU/CmcH family.

In terms of biological role, involved in 6-O-carbamoylation of Nod-factors. This Bradyrhizobium diazoefficiens (strain JCM 10833 / BCRC 13528 / IAM 13628 / NBRC 14792 / USDA 110) protein is Nodulation protein NolO (nolO).